Reading from the N-terminus, the 1067-residue chain is Eukaryotic translation initiation factor 3 subunit A (1067 aa).

Residues 92–121 (LKKFIELAEKKVTEAQAKADEIQSSLESAA) are a coiled coil. Residues 339-523 (MTKAASFVLL…GVLTFDTDIF (185 aa)) enclose the PCI domain. A coiled-coil region spans residues 608 to 899 (RVLIEKKKEA…QKQREEEAEA (292 aa)). 4 stretches are compositionally biased toward basic and acidic residues: residues 617-632 (AATD…EETR), 642-665 (EAEK…DEQD), 795-901 (EVSE…EARR), and 916-926 (AEPERPAERTA). Disordered regions lie at residues 617 to 665 (AATD…DEQD) and 795 to 1067 (EVSE…QQQQ). 2 stretches are compositionally biased toward low complexity: residues 965 to 976 (AAPAAAPAPAAE) and 1025 to 1046 (SSSS…AASS).

Belongs to the eIF-3 subunit A family. In terms of assembly, component of the eukaryotic translation initiation factor 3 (eIF-3) complex.

Its subcellular location is the cytoplasm. In terms of biological role, RNA-binding component of the eukaryotic translation initiation factor 3 (eIF-3) complex, which is involved in protein synthesis of a specialized repertoire of mRNAs and, together with other initiation factors, stimulates binding of mRNA and methionyl-tRNAi to the 40S ribosome. The eIF-3 complex specifically targets and initiates translation of a subset of mRNAs involved in cell proliferation. The polypeptide is Eukaryotic translation initiation factor 3 subunit A (tif32) (Neosartorya fischeri (strain ATCC 1020 / DSM 3700 / CBS 544.65 / FGSC A1164 / JCM 1740 / NRRL 181 / WB 181) (Aspergillus fischerianus)).